A 346-amino-acid chain; its full sequence is 4-hydroxy-3-methylbut-2-enyl diphosphate reductase (346 aa).

[4Fe-4S] cluster is bound at residue Cys19. Positions 48 and 84 each coordinate (2E)-4-hydroxy-3-methylbut-2-enyl diphosphate. Dimethylallyl diphosphate contacts are provided by His48 and His84. The isopentenyl diphosphate site is built by His48 and His84. Cys106 serves as a coordination point for [4Fe-4S] cluster. His134 lines the (2E)-4-hydroxy-3-methylbut-2-enyl diphosphate pocket. His134 serves as a coordination point for dimethylallyl diphosphate. Isopentenyl diphosphate is bound at residue His134. Catalysis depends on Glu136, which acts as the Proton donor. Thr175 serves as a coordination point for (2E)-4-hydroxy-3-methylbut-2-enyl diphosphate. Cys205 lines the [4Fe-4S] cluster pocket. Positions 233, 234, 235, and 278 each coordinate (2E)-4-hydroxy-3-methylbut-2-enyl diphosphate. Residues Ser233, Ser234, Asn235, and Ser278 each contribute to the dimethylallyl diphosphate site. Positions 233, 234, 235, and 278 each coordinate isopentenyl diphosphate.

The protein belongs to the IspH family. Requires [4Fe-4S] cluster as cofactor.

It carries out the reaction isopentenyl diphosphate + 2 oxidized [2Fe-2S]-[ferredoxin] + H2O = (2E)-4-hydroxy-3-methylbut-2-enyl diphosphate + 2 reduced [2Fe-2S]-[ferredoxin] + 2 H(+). It catalyses the reaction dimethylallyl diphosphate + 2 oxidized [2Fe-2S]-[ferredoxin] + H2O = (2E)-4-hydroxy-3-methylbut-2-enyl diphosphate + 2 reduced [2Fe-2S]-[ferredoxin] + 2 H(+). It participates in isoprenoid biosynthesis; dimethylallyl diphosphate biosynthesis; dimethylallyl diphosphate from (2E)-4-hydroxy-3-methylbutenyl diphosphate: step 1/1. Its pathway is isoprenoid biosynthesis; isopentenyl diphosphate biosynthesis via DXP pathway; isopentenyl diphosphate from 1-deoxy-D-xylulose 5-phosphate: step 6/6. Functionally, catalyzes the conversion of 1-hydroxy-2-methyl-2-(E)-butenyl 4-diphosphate (HMBPP) into a mixture of isopentenyl diphosphate (IPP) and dimethylallyl diphosphate (DMAPP). Acts in the terminal step of the DOXP/MEP pathway for isoprenoid precursor biosynthesis. The polypeptide is 4-hydroxy-3-methylbut-2-enyl diphosphate reductase (Brucella abortus (strain S19)).